Here is a 202-residue protein sequence, read N- to C-terminus: Dephospho-CoA kinase (202 aa).

Residues 6–202 (KVSITGDLSS…EYFYALKGAL (197 aa)) enclose the DPCK domain. 14-19 (SSGKTE) contributes to the ATP binding site.

The protein belongs to the CoaE family.

The protein resides in the cytoplasm. The enzyme catalyses 3'-dephospho-CoA + ATP = ADP + CoA + H(+). Its pathway is cofactor biosynthesis; coenzyme A biosynthesis; CoA from (R)-pantothenate: step 5/5. Functionally, catalyzes the phosphorylation of the 3'-hydroxyl group of dephosphocoenzyme A to form coenzyme A. This is Dephospho-CoA kinase from Chlamydia felis (strain Fe/C-56) (Chlamydophila felis).